The sequence spans 108 residues: Large ribosomal subunit protein uL24 (108 aa).

It belongs to the universal ribosomal protein uL24 family. As to quaternary structure, part of the 50S ribosomal subunit.

Its function is as follows. One of two assembly initiator proteins, it binds directly to the 5'-end of the 23S rRNA, where it nucleates assembly of the 50S subunit. In terms of biological role, one of the proteins that surrounds the polypeptide exit tunnel on the outside of the subunit. The sequence is that of Large ribosomal subunit protein uL24 from Mycoplasma mycoides subsp. mycoides SC (strain CCUG 32753 / NCTC 10114 / PG1).